The sequence spans 312 residues: Putative movement protein (312 aa).

Positions 266 to 293 (RNHLSLQPPPLRVARKDSEESSSTSVPE) are disordered. The stretch at 278 to 307 (VARKDSEESSSTSVPEIENLTKQVKDISSY) forms a coiled coil.

This sequence belongs to the caulimoviridae movement protein family. As to quaternary structure, homotrimer, through the coiled-coil domain. Interacts with VAP.

Its subcellular location is the host cell junction. It is found in the host plasmodesma. Its function is as follows. Transports viral genome to neighboring plant cells directly through plasmosdesmata, without any budding. The movement protein allows efficient cell to cell propagation, by bypassing the host cell wall barrier. Acts by forming tubules structures that increase the size exclusion limit (SEL) of plasmodesmata, thereby allowing viral ribonucleocapsids to spread directly to neighboring cells. The sequence is that of Putative movement protein from Cestrum parqui (CmYLCV).